A 139-amino-acid chain; its full sequence is HTH-type transcriptional regulator MntR (139 aa).

In terms of domain architecture, HTH dtxR-type spans 1–63 (MPTPSMEDHI…YEKYRGLTLT (63 aa)). 6 residues coordinate Mn(2+): aspartate 8, glutamate 11, histidine 77, glutamate 99, glutamate 102, and histidine 103.

It belongs to the DtxR/MntR family. Homodimer.

Its subcellular location is the cytoplasm. Its activity is regulated as follows. DNA binding is strongly activated by Mn(2+). Central regulator of manganese homeostasis. This Lysinibacillus sphaericus (strain C3-41) protein is HTH-type transcriptional regulator MntR.